Consider the following 304-residue polypeptide: Mycothiol acetyltransferase (304 aa).

Residue E36 participates in 1D-myo-inositol 2-(L-cysteinylamino)-2-deoxy-alpha-D-glucopyranoside binding. Acetyl-CoA is bound at residue 73 to 75 (LFV). The N-acetyltransferase domain occupies 145–304 (LEIQTYTESV…EEHCVWAKSD (160 aa)). E179, K225, and E236 together coordinate 1D-myo-inositol 2-(L-cysteinylamino)-2-deoxy-alpha-D-glucopyranoside. 240 to 242 (VGL) is an acetyl-CoA binding site. Y274 serves as a coordination point for 1D-myo-inositol 2-(L-cysteinylamino)-2-deoxy-alpha-D-glucopyranoside. An acetyl-CoA-binding site is contributed by 279–284 (NDPAVK).

It belongs to the acetyltransferase family. MshD subfamily. In terms of assembly, monomer.

The enzyme catalyses 1D-myo-inositol 2-(L-cysteinylamino)-2-deoxy-alpha-D-glucopyranoside + acetyl-CoA = mycothiol + CoA + H(+). Its function is as follows. Catalyzes the transfer of acetyl from acetyl-CoA to desacetylmycothiol (Cys-GlcN-Ins) to form mycothiol. In Corynebacterium aurimucosum (strain ATCC 700975 / DSM 44827 / CIP 107346 / CN-1) (Corynebacterium nigricans), this protein is Mycothiol acetyltransferase.